We begin with the raw amino-acid sequence, 384 residues long: MNKLNSVVVARGAVAVLLIGLAGCTGSLLEPKKIEYKTASANKVPTLEVPPDLTSPTRDDRYAVPDTSGKGAATFSAYSAERSPQARAQQKSDVLPEVDTARIERSGNQRWLVASGSPDKLWGPVKDFWQETGFVIKLELPDAGVMETDWAENRAKIQQDFIRNILGKVIDSVYSTAERDKFRTRLEPGSTPGTTDIFISHRGMYEIFVTEGKDQTKWQPRPADPELEAEMLRRLMVRLGSEEKRATAAMQAAQEKPLERAKMTRGPDGSGTLEVEESFDRAWRRVGLALDRVGFTVEDRDRSRGLYFVRYVDPEIDNEKKEEGFLSKLNIFKSSSSGKPQTQYRIFVKDDASRSTVQVLTLEGGVDQSETSKRILSLLYDQLK.

Residues 1-23 form the signal peptide; that stretch reads MNKLNSVVVARGAVAVLLIGLAG. The N-palmitoyl cysteine moiety is linked to residue cysteine 24. Cysteine 24 carries S-diacylglycerol cysteine lipidation. Disordered stretches follow at residues 47–70 and 251–273; these read LEVPPDLTSPTRDDRYAVPDTSGK and QAAQEKPLERAKMTRGPDGSGTL.

Belongs to the BamC family. Part of the Bam complex.

The protein localises to the cell outer membrane. Part of the outer membrane protein assembly complex, which is involved in assembly and insertion of beta-barrel proteins into the outer membrane. The chain is Outer membrane protein assembly factor BamC from Accumulibacter regalis.